The chain runs to 254 residues: uncharacterized protein (254 aa).

The next 5 membrane-spanning stretches (helical) occupy residues 33 to 53 (MLWV…LFFI), 70 to 90 (FNKL…LFKS), 92 to 112 (FALS…LNFM), 133 to 153 (FIIF…ILLI), and 223 to 243 (FLVF…PLIF).

To M.jannaschii MJ0902.

Its subcellular location is the cell membrane. This is an uncharacterized protein from Methanocaldococcus jannaschii (strain ATCC 43067 / DSM 2661 / JAL-1 / JCM 10045 / NBRC 100440) (Methanococcus jannaschii).